We begin with the raw amino-acid sequence, 139 residues long: Thiosulfate:glutathione sulfurtransferase (139 aa).

Ser26 is modified (phosphoserine). Positions 37–138 (HDPNVVLVDV…WVSHGGDKLD (102 aa)) constitute a Rhodanese domain. Cys98 acts as the Cysteine persulfide intermediate in catalysis.

It is found in the mitochondrion. It catalyses the reaction thiosulfate + glutathione = S-sulfanylglutathione + sulfite + H(+). With respect to regulation, GSS(-) is a potent inhibitor of RDL1, since the presence of the sulfur dioxygenase strongly increases the RDL1 catalytic activity. Functionally, thiosulfate:glutathione sulfurtransferase (TST) required to produce S-sulfanylglutathione (GSS(-)), a central intermediate in hydrogen sulfide metabolism. Provides the link between the first step in H(2)S metabolism performed by the sulfide:quinone oxidoreductase (SQOR) which catalyzes the conversion of H(2)S to thiosulfate, and the sulfur dioxygenase (SDO) which uses GSS(-) as substrate. The thermodynamic coupling of the irreversible SDO and reversible TST reactions provides a model for the physiologically relevant reaction with thiosulfate as the sulfane donor. This chain is Thiosulfate:glutathione sulfurtransferase (RDL1), found in Saccharomyces cerevisiae (strain ATCC 204508 / S288c) (Baker's yeast).